A 111-amino-acid chain; its full sequence is Large ribosomal subunit protein uL22 (111 aa).

This sequence belongs to the universal ribosomal protein uL22 family. Part of the 50S ribosomal subunit.

Functionally, this protein binds specifically to 23S rRNA; its binding is stimulated by other ribosomal proteins, e.g. L4, L17, and L20. It is important during the early stages of 50S assembly. It makes multiple contacts with different domains of the 23S rRNA in the assembled 50S subunit and ribosome. Its function is as follows. The globular domain of the protein is located near the polypeptide exit tunnel on the outside of the subunit, while an extended beta-hairpin is found that lines the wall of the exit tunnel in the center of the 70S ribosome. The protein is Large ribosomal subunit protein uL22 of Francisella tularensis subsp. tularensis (strain FSC 198).